The following is a 468-amino-acid chain: ATP synthase subunit beta (468 aa).

155–162 (GGAGVGKT) serves as a coordination point for ATP.

The protein belongs to the ATPase alpha/beta chains family. F-type ATPases have 2 components, CF(1) - the catalytic core - and CF(0) - the membrane proton channel. CF(1) has five subunits: alpha(3), beta(3), gamma(1), delta(1), epsilon(1). CF(0) has three main subunits: a(1), b(2) and c(9-12). The alpha and beta chains form an alternating ring which encloses part of the gamma chain. CF(1) is attached to CF(0) by a central stalk formed by the gamma and epsilon chains, while a peripheral stalk is formed by the delta and b chains.

It is found in the cell membrane. The catalysed reaction is ATP + H2O + 4 H(+)(in) = ADP + phosphate + 5 H(+)(out). In terms of biological role, produces ATP from ADP in the presence of a proton gradient across the membrane. The catalytic sites are hosted primarily by the beta subunits. The chain is ATP synthase subunit beta from Streptococcus equi subsp. zooepidemicus (strain H70).